We begin with the raw amino-acid sequence, 365 residues long: Outer membrane protein assembly factor BamC (365 aa).

The signal sequence occupies residues 1 to 19 (MKHNRLAIAALAPVLILVG). Residue Cys20 is the site of N-palmitoyl cysteine attachment. Cys20 carries S-diacylglycerol cysteine lipidation.

This sequence belongs to the BamC family. In terms of assembly, part of the Bam complex.

The protein localises to the cell outer membrane. In terms of biological role, part of the outer membrane protein assembly complex, which is involved in assembly and insertion of beta-barrel proteins into the outer membrane. This is Outer membrane protein assembly factor BamC from Ferrimonas balearica (strain DSM 9799 / CCM 4581 / KCTC 23876 / PAT).